Reading from the N-terminus, the 332-residue chain is Glycerol-3-phosphate dehydrogenase [NAD(P)+] (332 aa).

Residues S14, W15, R35, and K107 each contribute to the NADPH site. Sn-glycerol 3-phosphate contacts are provided by K107, G137, and S139. Position 141 (A141) interacts with NADPH. 5 residues coordinate sn-glycerol 3-phosphate: K192, D245, S255, R256, and N257. The active-site Proton acceptor is the K192. R256 is an NADPH binding site. NADPH is bound by residues V280 and E282.

Belongs to the NAD-dependent glycerol-3-phosphate dehydrogenase family.

It localises to the cytoplasm. It carries out the reaction sn-glycerol 3-phosphate + NAD(+) = dihydroxyacetone phosphate + NADH + H(+). It catalyses the reaction sn-glycerol 3-phosphate + NADP(+) = dihydroxyacetone phosphate + NADPH + H(+). It functions in the pathway membrane lipid metabolism; glycerophospholipid metabolism. Its function is as follows. Catalyzes the reduction of the glycolytic intermediate dihydroxyacetone phosphate (DHAP) to sn-glycerol 3-phosphate (G3P), the key precursor for phospholipid synthesis. The polypeptide is Glycerol-3-phosphate dehydrogenase [NAD(P)+] (Desulfovibrio desulfuricans (strain ATCC 27774 / DSM 6949 / MB)).